The primary structure comprises 220 residues: Deoxyribose-phosphate aldolase (220 aa).

Residue Asp-89 is the Proton donor/acceptor of the active site. Lys-151 acts as the Schiff-base intermediate with acetaldehyde in catalysis. Residue Lys-180 is the Proton donor/acceptor of the active site.

It belongs to the DeoC/FbaB aldolase family. DeoC type 1 subfamily.

The protein resides in the cytoplasm. The enzyme catalyses 2-deoxy-D-ribose 5-phosphate = D-glyceraldehyde 3-phosphate + acetaldehyde. The protein operates within carbohydrate degradation; 2-deoxy-D-ribose 1-phosphate degradation; D-glyceraldehyde 3-phosphate and acetaldehyde from 2-deoxy-alpha-D-ribose 1-phosphate: step 2/2. Functionally, catalyzes a reversible aldol reaction between acetaldehyde and D-glyceraldehyde 3-phosphate to generate 2-deoxy-D-ribose 5-phosphate. In Staphylococcus epidermidis (strain ATCC 35984 / DSM 28319 / BCRC 17069 / CCUG 31568 / BM 3577 / RP62A), this protein is Deoxyribose-phosphate aldolase.